Reading from the N-terminus, the 401-residue chain is S-adenosylmethionine synthase 1 (401 aa).

His15 provides a ligand contact to ATP. Asp17 lines the Mg(2+) pocket. Glu43 contacts K(+). Residues Glu56 and Gln98 each coordinate L-methionine. The interval 98–108 (QSPDIAQGVDK) is flexible loop. Residues 173 to 175 (DGK), 246 to 247 (RF), Asp255, 261 to 262 (RK), Ala278, and Lys282 contribute to the ATP site. Residue Asp255 participates in L-methionine binding. L-methionine is bound at residue Lys286.

Belongs to the AdoMet synthase family. Homotetramer; dimer of dimers. Mg(2+) serves as cofactor. K(+) is required as a cofactor.

It localises to the cytoplasm. It catalyses the reaction L-methionine + ATP + H2O = S-adenosyl-L-methionine + phosphate + diphosphate. Its pathway is amino-acid biosynthesis; S-adenosyl-L-methionine biosynthesis; S-adenosyl-L-methionine from L-methionine: step 1/1. Catalyzes the formation of S-adenosylmethionine (AdoMet) from methionine and ATP. The overall synthetic reaction is composed of two sequential steps, AdoMet formation and the subsequent tripolyphosphate hydrolysis which occurs prior to release of AdoMet from the enzyme. The polypeptide is S-adenosylmethionine synthase 1 (Frankia casuarinae (strain DSM 45818 / CECT 9043 / HFP020203 / CcI3)).